The sequence spans 227 residues: Probable septum site-determining protein MinC (227 aa).

Belongs to the MinC family. Interacts with MinD and FtsZ.

Cell division inhibitor that blocks the formation of polar Z ring septums. Rapidly oscillates between the poles of the cell to destabilize FtsZ filaments that have formed before they mature into polar Z rings. Prevents FtsZ polymerization. The protein is Probable septum site-determining protein MinC of Shouchella clausii (strain KSM-K16) (Alkalihalobacillus clausii).